The following is a 233-amino-acid chain: C-type lectin domain family 2 member D2 (233 aa).

The tract at residues 1–34 is disordered; the sequence is MPSSAHLQDAPPLLSRTLTQDEEQTSLRQSSSCG. At 1–76 the chain is on the cytoplasmic side; the sequence is MPSSAHLQDA…SPESPAKLPC (76 aa). A helical; Signal-anchor for type II membrane protein transmembrane segment spans residues 77-97; it reads CYGVIMVLSVAVVALSVALSV. The Extracellular segment spans residues 98 to 233; sequence KKTPQILTVK…KPNSYTSQCQ (136 aa). Residues 119–228 form the C-type lectin domain; sequence VGNKCYYFNE…KSICSKPNSY (110 aa). N132 carries an N-linked (GlcNAc...) asparagine glycan.

It localises to the cell membrane. Lectin-type cell surface receptor. In Rattus norvegicus (Rat), this protein is C-type lectin domain family 2 member D2 (Clec2d2).